The primary structure comprises 347 residues: MNQLYQRSFLRLMDFSMNEIMYILRLSHFLKQQKSNHTETQKLHKKNIVLIFENHSTRTRCAFEVAAFDQGARVTCLTPNISQIGHKESIKDTAKILGRMYHGIQYRGYNQDTINIFAQYSNVPVWNGLTEQFHPTQMLADLMTMQEQVPHKSFCKIKLAYVGDARNNIGNSLLEAASIIGFDLRLVSPREFWPQQELLTTCRKLTKLNKVNILLTENIQEGVKDVDFLYTDVWVSMGENEKVWTHRISLLSPYQVNQDMINYTGNSNVKFLHCLPALHNNETTIGKKIAHKHNLFNGLEVTNEIFESKHSIVFDQAENRLHTIKALMISTLLPNLYHKNITFHTKN.

Residues 56–59 (STRT), Gln-83, Arg-107, and 134–137 (HPTQ) each bind carbamoyl phosphate. Residues Asn-168, Asp-232, and 236 to 237 (SM) each bind L-ornithine. Carbamoyl phosphate-binding positions include 274-275 (CL) and Arg-320.

It belongs to the aspartate/ornithine carbamoyltransferase superfamily. OTCase family.

The protein resides in the cytoplasm. It carries out the reaction carbamoyl phosphate + L-ornithine = L-citrulline + phosphate + H(+). Functionally, reversibly catalyzes the transfer of the carbamoyl group from carbamoyl phosphate (CP) to the N(epsilon) atom of ornithine (ORN) to produce L-citrulline. This chain is Ornithine carbamoyltransferase, found in Blochmanniella floridana.